Reading from the N-terminus, the 197-residue chain is Recombination protein RecR (197 aa).

The segment at 57–72 adopts a C4-type zinc-finger fold; that stretch reads CSVCFGITEDDPCHLC. Residues 79–174 form the Toprim domain; that stretch reads TTICVVEEPQ…RVTRLAHGIP (96 aa).

Belongs to the RecR family.

May play a role in DNA repair. It seems to be involved in an RecBC-independent recombinational process of DNA repair. It may act with RecF and RecO. This Geotalea daltonii (strain DSM 22248 / JCM 15807 / FRC-32) (Geobacter daltonii) protein is Recombination protein RecR.